Reading from the N-terminus, the 236-residue chain is Diaminopimelate epimerase (236 aa).

Substrate contacts are provided by N8 and N55. C64 acts as the Proton donor in catalysis. Residues 65 to 66 (GN), N159, and 176 to 177 (ER) contribute to the substrate site. C186 (proton acceptor) is an active-site residue. 187 to 188 (GT) contributes to the substrate binding site.

It belongs to the diaminopimelate epimerase family. In terms of assembly, probably forms homotrimers.

It is found in the cytoplasm. It catalyses the reaction (2S,6S)-2,6-diaminopimelate = meso-2,6-diaminopimelate. Its pathway is amino-acid biosynthesis; L-lysine biosynthesis via DAP pathway; DL-2,6-diaminopimelate from LL-2,6-diaminopimelate: step 1/1. In terms of biological role, catalyzes the stereoinversion of LL-2,6-diaminopimelate (L,L-DAP) to meso-diaminopimelate (meso-DAP), a precursor of L-lysine and an essential component of the bacterial peptidoglycan. Also catalyzes the racemization of certain amino acids, including Lys, with low efficiency. In Thermotoga maritima (strain ATCC 43589 / DSM 3109 / JCM 10099 / NBRC 100826 / MSB8), this protein is Diaminopimelate epimerase.